The following is a 322-amino-acid chain: Malate dehydrogenase (322 aa).

NAD(+) is bound by residues 10 to 15 (GSGMIG) and aspartate 34. Residues arginine 83 and arginine 89 each coordinate substrate. NAD(+) is bound by residues asparagine 96 and 119 to 121 (ITN). Asparagine 121 and arginine 152 together coordinate substrate. Histidine 176 (proton acceptor) is an active-site residue.

This sequence belongs to the LDH/MDH superfamily. MDH type 3 family.

The enzyme catalyses (S)-malate + NAD(+) = oxaloacetate + NADH + H(+). In terms of biological role, catalyzes the reversible oxidation of malate to oxaloacetate. In Mesorhizobium japonicum (strain LMG 29417 / CECT 9101 / MAFF 303099) (Mesorhizobium loti (strain MAFF 303099)), this protein is Malate dehydrogenase.